The chain runs to 36 residues: Serum amyloid P-component (36 aa).

The region spanning 6-36 (SGKVFVIPMATSTSHVKLHARVSEPISAMTM) is the Pentraxin (PTX) domain.

The protein belongs to the pentraxin family. As to quaternary structure, homopentamer. Discoid arrangement of 5 covalently bound subunits. Ca(2+) serves as cofactor.

It is found in the secreted. This is Serum amyloid P-component from Salmo salar (Atlantic salmon).